The primary structure comprises 887 residues: Bifunctional uridylyltransferase/uridylyl-removing enzyme (887 aa).

Residues 1–337 (MINTSPLLNY…RLPNYERKIE (337 aa)) form a uridylyltransferase region. Residues 339–699 (VNDHFKIVDN…AHRKAAQDAV (361 aa)) are uridylyl-removing. An HD domain is found at 457-579 (VDAHTLLLLR…LGDMEHLDYL (123 aa)). ACT domains follow at residues 700 to 782 (QIFI…LMQR) and 809 to 887 (MVEI…ICQH).

This sequence belongs to the GlnD family. Requires Mg(2+) as cofactor.

It catalyses the reaction [protein-PII]-L-tyrosine + UTP = [protein-PII]-uridylyl-L-tyrosine + diphosphate. The catalysed reaction is [protein-PII]-uridylyl-L-tyrosine + H2O = [protein-PII]-L-tyrosine + UMP + H(+). Uridylyltransferase (UTase) activity is inhibited by glutamine, while glutamine activates uridylyl-removing (UR) activity. Modifies, by uridylylation and deuridylylation, the PII regulatory proteins (GlnB and homologs), in response to the nitrogen status of the cell that GlnD senses through the glutamine level. Under low glutamine levels, catalyzes the conversion of the PII proteins and UTP to PII-UMP and PPi, while under higher glutamine levels, GlnD hydrolyzes PII-UMP to PII and UMP (deuridylylation). Thus, controls uridylylation state and activity of the PII proteins, and plays an important role in the regulation of nitrogen assimilation and metabolism. This Acinetobacter baumannii (strain AB307-0294) protein is Bifunctional uridylyltransferase/uridylyl-removing enzyme.